The primary structure comprises 236 residues: Large ribosomal subunit protein uL2 (236 aa).

A disordered region spans residues 198-236 (DHPFGGGGRQHPGRPKTVSRGTPPGRKVGSIAARRTGKR).

Belongs to the universal ribosomal protein uL2 family. Part of the 50S ribosomal subunit. Forms a bridge to the 30S subunit in the 70S ribosome.

One of the primary rRNA binding proteins. Required for association of the 30S and 50S subunits to form the 70S ribosome, for tRNA binding and peptide bond formation. It has been suggested to have peptidyltransferase activity; this is somewhat controversial. Makes several contacts with the 16S rRNA in the 70S ribosome. The polypeptide is Large ribosomal subunit protein uL2 (Methanothrix thermoacetophila (strain DSM 6194 / JCM 14653 / NBRC 101360 / PT) (Methanosaeta thermophila)).